The chain runs to 154 residues: Catabolic 3-dehydroquinase (154 aa).

Tyrosine 25 serves as the catalytic Proton acceptor. The substrate site is built by asparagine 79, histidine 85, and aspartate 92. Histidine 105 acts as the Proton donor in catalysis. Substrate-binding positions include 106 to 107 (IS) and arginine 116.

This sequence belongs to the type-II 3-dehydroquinase family. In terms of assembly, homododecamer. Adopts a ring-like structure, composed of an arrangement of two hexameric rings stacked on top of one another.

It carries out the reaction 3-dehydroquinate = 3-dehydroshikimate + H2O. It participates in aromatic compound metabolism; 3,4-dihydroxybenzoate biosynthesis; 3,4-dihydroxybenzoate from 3-dehydroquinate: step 1/2. In terms of biological role, is involved in the catabolism of quinate. Allows the utilization of quinate as carbon source via the beta-ketoadipate pathway. This chain is Catabolic 3-dehydroquinase, found in Sclerotinia sclerotiorum (strain ATCC 18683 / 1980 / Ss-1) (White mold).